The primary structure comprises 434 residues: Beta-glucuronosyltransferase GlcAT14B (434 aa).

Over 1–21 (MKKLKSYYMQVRNQQQSLDRK) the chain is Cytoplasmic. The chain crosses the membrane as a signal-anchor for type II membrane protein span at residues 22–42 (WILPLAIGSICSLFLLLLTNL). Topologically, residues 43–434 (ASSSGQTRLI…TENFRPRQCR (392 aa)) are lumenal. Residues N138, N187, N316, and N392 are each glycosylated (N-linked (GlcNAc...) asparagine).

Belongs to the glycosyltransferase 14 family.

The protein localises to the golgi apparatus membrane. Its function is as follows. Beta-glucuronosyltransferase involved in the biosynthesis of type II arabinogalactan (AG). Modifies both the beta-1,6-linked galactan and beta-1,3-linked galactan present in type II AG. This Arabidopsis thaliana (Mouse-ear cress) protein is Beta-glucuronosyltransferase GlcAT14B.